Here is a 374-residue protein sequence, read N- to C-terminus: O-methyltransferase 16 (374 aa).

5 residues coordinate S-adenosyl-L-homocysteine: S195, G219, D242, D262, and K276. D242 contacts S-adenosyl-L-methionine. H280 acts as the Proton acceptor in catalysis.

Belongs to the class I-like SAM-binding methyltransferase superfamily. Cation-independent O-methyltransferase family. Homodimer. In terms of tissue distribution, expressed mainly in vasculature and cortex tissues at low levels.

It catalyses the reaction dopamine + S-adenosyl-L-methionine = 4-methoxytyramine + S-adenosyl-L-homocysteine + H(+). It functions in the pathway aromatic compound metabolism. The protein operates within alkaloid biosynthesis. O-methyltransferase participating in the biosynthesis of natural products derived from phenylethylamine, including mescaline, a natural hallucinogen potentially used in psychotherapeutic treatments. Catalyzes the O-methylation of dopamine to produce 4-methoxytyramine. The sequence is that of O-methyltransferase 16 from Lophophora williamsii (Peyote).